A 324-amino-acid polypeptide reads, in one-letter code: Acetyl-coenzyme A carboxylase carboxyl transferase subunit alpha (324 aa).

A CoA carboxyltransferase C-terminal domain is found at 44–298 (QLERRAEELR…KQTLIDTIDE (255 aa)).

This sequence belongs to the AccA family. Acetyl-CoA carboxylase is a heterohexamer composed of biotin carboxyl carrier protein (AccB), biotin carboxylase (AccC) and two subunits each of ACCase subunit alpha (AccA) and ACCase subunit beta (AccD).

The protein localises to the cytoplasm. It carries out the reaction N(6)-carboxybiotinyl-L-lysyl-[protein] + acetyl-CoA = N(6)-biotinyl-L-lysyl-[protein] + malonyl-CoA. Its pathway is lipid metabolism; malonyl-CoA biosynthesis; malonyl-CoA from acetyl-CoA: step 1/1. In terms of biological role, component of the acetyl coenzyme A carboxylase (ACC) complex. First, biotin carboxylase catalyzes the carboxylation of biotin on its carrier protein (BCCP) and then the CO(2) group is transferred by the carboxyltransferase to acetyl-CoA to form malonyl-CoA. This chain is Acetyl-coenzyme A carboxylase carboxyl transferase subunit alpha, found in Rippkaea orientalis (strain PCC 8801 / RF-1) (Cyanothece sp. (strain PCC 8801)).